The chain runs to 226 residues: tRNA (guanine-N(7)-)-methyltransferase (226 aa).

S-adenosyl-L-methionine-binding residues include Glu-59, Glu-84, Asp-111, and Asp-134. Asp-134 is an active-site residue. Lys-138 is a substrate binding site. The interval 140 to 145 (RHNKRR) is interaction with RNA. Substrate is bound by residues Asp-170 and 205–208 (TKFE).

Belongs to the class I-like SAM-binding methyltransferase superfamily. TrmB family.

The catalysed reaction is guanosine(46) in tRNA + S-adenosyl-L-methionine = N(7)-methylguanosine(46) in tRNA + S-adenosyl-L-homocysteine. It participates in tRNA modification; N(7)-methylguanine-tRNA biosynthesis. In terms of biological role, catalyzes the formation of N(7)-methylguanine at position 46 (m7G46) in tRNA. This chain is tRNA (guanine-N(7)-)-methyltransferase, found in Chromobacterium violaceum (strain ATCC 12472 / DSM 30191 / JCM 1249 / CCUG 213 / NBRC 12614 / NCIMB 9131 / NCTC 9757 / MK).